The chain runs to 102 residues: Protein 108 (102 aa).

The first 30 residues, 1–30 (MASVKSSSSSSSSSFISLLLLILLVIVLQS), serve as a signal peptide directing secretion. Cystine bridges form between Cys-41–Cys-77, Cys-51–Cys-66, Cys-67–Cys-92, and Cys-79–Cys-99.

The protein belongs to the A9/FIL1 family. Stamen- and tapetum-specific.

It is found in the secreted. In Solanum lycopersicum (Tomato), this protein is Protein 108.